We begin with the raw amino-acid sequence, 29 residues long: Probable small toxic protein BsrH (29 aa).

A helical membrane pass occupies residues 6 to 26 (FQALMLMLAFGSFIIALLTYI).

Its subcellular location is the cell membrane. Possible toxic component of a type I toxin-antitoxin (TA) system; an overlapping antisense RNA has been identified. The sequence is that of Probable small toxic protein BsrH from Bacillus subtilis (strain 168).